Consider the following 384-residue polypeptide: MSTKIHQQAVQPGISQQVSTRLAFFIAGLGMAAWAPLVPFAKARIGLNDASLGLLLLCIGIGSMLAMPLTGVLTAKWGCRAVILLAGAVLCLDLPLLVLMNTPATMAIALLVFGAAMGIIDVAMNIQAVIVEKASGRAMMSGFHGLFSVGGIVGAGGVSALLWLGLNPLTAIMATVVLMIILLLAANKNLLRGSGEPHDGPLFVFPRGWVMFIGFLCFVMFLAEGSMLDWSAVFLTTLRGMSPSQAGMGYAVFAIAMTLGRLNGDRIVNGLGRYKVLLGGSLCSAIGIIIAISIDSSMAAIIGFMLVGFGASNVVPILFTAAGNQTVMPANLAVASITTIGYAGILAGPAAIGFIAQLSSLSVAFGCVALLLLTVAASARAVTR.

A run of 12 helical transmembrane segments spans residues 22–42, 52–72, 81–101, 106–126, 143–163, 164–184, 202–222, 240–260, 276–296, 299–319, 327–347, and 352–372; these read LAFFIAGLGMAAWAPLVPFAK, LGLLLLCIGIGSMLAMPLTGV, AVILLAGAVLCLDLPLLVLMN, MAIALLVFGAAMGIIDVAMNI, FHGLFSVGGIVGAGGVSALLW, LGLNPLTAIMATVVLMIILLL, LFVFPRGWVMFIGFLCFVMFL, GMSPSQAGMGYAVFAIAMTLG, VLLGGSLCSAIGIIIAISIDS, AAIIGFMLVGFGASNVVPILF, VMPANLAVASITTIGYAGILA, and IGFIAQLSSLSVAFGCVALLL.

This sequence belongs to the major facilitator superfamily.

Its subcellular location is the membrane. This is an uncharacterized protein from Yersinia pestis.